Consider the following 89-residue polypeptide: Small ribosomal subunit protein uS15 (89 aa).

It belongs to the universal ribosomal protein uS15 family. As to quaternary structure, part of the 30S ribosomal subunit. Forms a bridge to the 50S subunit in the 70S ribosome, contacting the 23S rRNA.

One of the primary rRNA binding proteins, it binds directly to 16S rRNA where it helps nucleate assembly of the platform of the 30S subunit by binding and bridging several RNA helices of the 16S rRNA. In terms of biological role, forms an intersubunit bridge (bridge B4) with the 23S rRNA of the 50S subunit in the ribosome. This chain is Small ribosomal subunit protein uS15, found in Pseudomonas entomophila (strain L48).